The following is a 487-amino-acid chain: b(0,+)-type amino acid transporter 1 (487 aa).

Basic and acidic residues predominate over residues 1–20 (MEETSPRRRREDEKSVHSTE). Residues 1–23 (MEETSPRRRREDEKSVHSTEPKT) form a disordered region. The Cytoplasmic portion of the chain corresponds to 1–31 (MEETSPRRRREDEKSVHSTEPKTTSLQKEVG). A Phosphoserine modification is found at S18. A helical transmembrane segment spans residues 32 to 55 (LLSGICIIVGTIIGSGIFISPKSV). An L-arginine-binding site is contributed by 43–47 (IIGSG). The Extracellular portion of the chain corresponds to 56–62 (LANTESV). The chain crosses the membrane as a helical span at residues 63–84 (GPCLIIWAACGVLATLGALCFA). Residues 85 to 110 (ELGTMITKSGGEYPYLMEAFGPIPAY) are Cytoplasmic-facing. Residues 111–137 (LFSWTSLIVMKPSSFAIICLSFSEYVC) form a helical membrane-spanning segment. Over 138–147 (AAFYLGCRPP) the chain is Extracellular. Transmembrane regions (helical) follow at residues 148–169 (AVVV…NALS) and 170–193 (VRLG…IIII). Residues 194–217 (SGLVLLAQGNVKNFQNSFEGSQTS) lie on the Extracellular side of the membrane. The chain crosses the membrane as a helical span at residues 218–238 (VGSISLAFYNGLWAYDGWNQL). D233 lines the L-arginine pocket. Topologically, residues 239-251 (NYITEELRNPYRN) are cytoplasmic. A helical membrane pass occupies residues 252–274 (LPMAIVIGIPLVTVCYILMNIAY). The Extracellular portion of the chain corresponds to 275 to 302 (FTVMTPTELLQSQAVAVTFGDRVLYPAS). The helical transmembrane segment at 303 to 325 (WVVPLFVAFSTIGAANGTCFTAG) threads the bilayer. Over 326–351 (RLIYVAGREGHMLKVLSYISVKRLTP) the chain is Cytoplasmic. 2 helical membrane-spanning segments follow: residues 352-370 (APAL…IPGD) and 371-391 (INSL…MTIL). Over 392 to 410 (GLVVMRFTRKDLERPIKVP) the chain is Cytoplasmic. A helical membrane pass occupies residues 411–431 (IFIPIIVILVSVFLILAPIIS). The Extracellular segment spans residues 432–434 (SPA). Residues 435-450 (WEYLYCVLFILSGLIF) traverse the membrane as a helical segment. The Cytoplasmic segment spans residues 451 to 487 (YFLFVHYKFRWAQKISRPITKHLQMLMEVVPPEKDPE).

The protein belongs to the amino acid-polyamine-organocation (APC) superfamily. As to quaternary structure, disulfide-linked heterodimer composed of the catalytic light chain subunit SLC7A9 and the heavy chain subunit SLC3A1. The heterodimer is the minimal functional unit. Assembles in heterotetramers (dimers of heterodimers) and higher order oligomers; the oligomerization is mediated by SLC3A1 likely to prevent degradation and facilitate heteromer trafficking to the plasma membrane. Interacts with CAV1. In terms of tissue distribution, outer medulla of kidney (at protein level). Kidney and small intestine. In the kidney localized to the apical membrane of the proximal tubules.

Its subcellular location is the apical cell membrane. It catalyses the reaction L-leucine(out) + L-arginine(in) = L-leucine(in) + L-arginine(out). The catalysed reaction is L-histidine(out) + L-arginine(in) = L-histidine(in) + L-arginine(out). The enzyme catalyses L-arginine(in) + L-phenylalanine(out) = L-arginine(out) + L-phenylalanine(in). It carries out the reaction L-cysteine(out) + L-arginine(in) = L-cysteine(in) + L-arginine(out). It catalyses the reaction L-cystine(out) + L-arginine(in) = L-cystine(in) + L-arginine(out). The catalysed reaction is L-lysine(out) + L-arginine(in) = L-lysine(in) + L-arginine(out). Associates with SLC3A1 to form a functional transporter complex that mediates the electrogenic exchange between cationic amino acids and neutral amino acids, with a stoichiometry of 1:1. Has system b(0,+)-like activity with high affinity for extracellular cationic amino acids and L-cystine and lower affinity for intracellular neutral amino acids. Substrate exchange is driven by high concentration of intracellular neutral amino acids and the intracellular reduction of L-cystine to L-cysteine. Required for reabsorption of L-cystine and dibasic amino acids across the brush border membrane in renal proximal tubules. The sequence is that of b(0,+)-type amino acid transporter 1 (Slc7a9) from Rattus norvegicus (Rat).